We begin with the raw amino-acid sequence, 297 residues long: Salivary glue protein Sgs-4 (297 aa).

A signal peptide spans 1–21; it reads MRLELLVVLLVGLAALAPSGS. 21 repeat units span residues 26–32, 33–39, 40–46, 47–53, 54–60, 61–67, 68–74, 75–81, 82–88, 89–95, 96–102, 103–109, 110–116, 117–123, 124–130, 131–137, 138–144, 145–151, 152–158, 159–165, and 166–172. The tract at residues 26–84 is disordered; the sequence is TEPPRCETEPPRCETEPPRCETEPPRCETEPPRCETTTPKCETTPPTCRTEPPTCKTEP. Residues 26-179 are 22 X 7 AA approximate tandem repeats of T-[ETK]-[PT]-P-[RKT]-C-[ERK]; that stretch reads TEPPRCETEP…TCKTEPPCEK (154 aa). A compositionally biased stretch (basic and acidic residues) spans 27-58; the sequence is EPPRCETEPPRCETEPPRCETEPPRCETEPPR. The segment covering 59-84 has biased composition (low complexity); it reads CETTTPKCETTPPTCRTEPPTCKTEP. Low complexity predominate over residues 141 to 174; the sequence is PTCKTEPPTCRTEPPTCKTEPPTCKTEPPTCKTE. Disordered stretches follow at residues 141 to 218 and 243 to 297; these read PTCK…SGCG and PDSK…KGGC. Residues 173–179 form a 22; approximate repeat; the sequence is TEPPCEK. Composition is skewed to basic residues over residues 181–208 and 282–291; these read CTKRIKRHRTKRTKRSKSTKKIVHHHNR and NTTKKPRKTQ.

As to expression, salivary gland.

It is found in the secreted. This chain is Salivary glue protein Sgs-4 (Sgs4), found in Drosophila melanogaster (Fruit fly).